A 228-amino-acid polypeptide reads, in one-letter code: Cytidylate kinase (228 aa).

Residue 11–19 (GPASAGKST) participates in ATP binding.

This sequence belongs to the cytidylate kinase family. Type 1 subfamily.

The protein localises to the cytoplasm. It carries out the reaction CMP + ATP = CDP + ADP. It catalyses the reaction dCMP + ATP = dCDP + ADP. The sequence is that of Cytidylate kinase from Limosilactobacillus reuteri (strain DSM 20016) (Lactobacillus reuteri).